The following is a 268-amino-acid chain: Thiazole synthase (268 aa).

Catalysis depends on Lys-108, which acts as the Schiff-base intermediate with DXP. Residues Gly-169, 195–196 (AG), and 217–218 (NS) each bind 1-deoxy-D-xylulose 5-phosphate. The tract at residues 248 to 268 (RLKENPLASPSSPLEGVISNN) is disordered. The segment covering 255–268 (ASPSSPLEGVISNN) has biased composition (polar residues).

The protein belongs to the ThiG family. Homotetramer. Forms heterodimers with either ThiH or ThiS.

It is found in the cytoplasm. It carries out the reaction [ThiS sulfur-carrier protein]-C-terminal-Gly-aminoethanethioate + 2-iminoacetate + 1-deoxy-D-xylulose 5-phosphate = [ThiS sulfur-carrier protein]-C-terminal Gly-Gly + 2-[(2R,5Z)-2-carboxy-4-methylthiazol-5(2H)-ylidene]ethyl phosphate + 2 H2O + H(+). The protein operates within cofactor biosynthesis; thiamine diphosphate biosynthesis. Its function is as follows. Catalyzes the rearrangement of 1-deoxy-D-xylulose 5-phosphate (DXP) to produce the thiazole phosphate moiety of thiamine. Sulfur is provided by the thiocarboxylate moiety of the carrier protein ThiS. In vitro, sulfur can be provided by H(2)S. The chain is Thiazole synthase from Prochlorococcus marinus (strain NATL1A).